A 41-amino-acid polypeptide reads, in one-letter code: Large ribosomal subunit protein bL36 (41 aa).

This sequence belongs to the bacterial ribosomal protein bL36 family.

The polypeptide is Large ribosomal subunit protein bL36 (Rhodopseudomonas palustris (strain BisB5)).